Consider the following 233-residue polypeptide: 6-carboxyhexanoate--CoA ligase (233 aa).

It belongs to the BioW family. In terms of assembly, homodimer. Requires Mg(2+) as cofactor.

The enzyme catalyses heptanedioate + ATP + CoA = 6-carboxyhexanoyl-CoA + AMP + diphosphate. Its pathway is metabolic intermediate metabolism; pimeloyl-CoA biosynthesis; pimeloyl-CoA from pimelate: step 1/1. Catalyzes the transformation of pimelate into pimeloyl-CoA with concomitant hydrolysis of ATP to AMP. The protein is 6-carboxyhexanoate--CoA ligase of Methanocaldococcus sp. (strain FS406-22).